Consider the following 217-residue polypeptide: tRNA (guanine-N(7)-)-methyltransferase (217 aa).

Residues Glu-48, Glu-73, Asn-100, and Asp-123 each contribute to the S-adenosyl-L-methionine site. The active site involves Asp-123. Residues Lys-127 and Asp-159 each coordinate substrate.

This sequence belongs to the class I-like SAM-binding methyltransferase superfamily. TrmB family.

The enzyme catalyses guanosine(46) in tRNA + S-adenosyl-L-methionine = N(7)-methylguanosine(46) in tRNA + S-adenosyl-L-homocysteine. It functions in the pathway tRNA modification; N(7)-methylguanine-tRNA biosynthesis. In terms of biological role, catalyzes the formation of N(7)-methylguanine at position 46 (m7G46) in tRNA. The polypeptide is tRNA (guanine-N(7)-)-methyltransferase (Leptospira borgpetersenii serovar Hardjo-bovis (strain JB197)).